The primary structure comprises 106 residues: MSANSMSDPRSPNKVLRYKPPPSECNPALDDPTPDYMNLLGMIFSMCGLMLKLKWCAWVAVYCSFISFANSRSSEDTKQMMSSFMLSISAVVMSYLQNPQPMTPPW.

A compositionally biased stretch (polar residues) spans 1–10 (MSANSMSDPR). Residues 1 to 29 (MSANSMSDPRSPNKVLRYKPPPSECNPAL) form a disordered region. S2 bears the N-acetylserine mark. Residues 2-32 (SANSMSDPRSPNKVLRYKPPPSECNPALDDP) lie on the Cytoplasmic side of the membrane. Residues 33 to 51 (TPDYMNLLGMIFSMCGLML) form a helical membrane-spanning segment. Residue K52 is a topological domain, lumenal. The helical transmembrane segment at 53 to 70 (LKWCAWVAVYCSFISFAN) threads the bilayer. Residues 71 to 74 (SRSS) are Cytoplasmic-facing. Residues 75-95 (EDTKQMMSSFMLSISAVVMSY) form a helical membrane-spanning segment. Residues 96-106 (LQNPQPMTPPW) are Lumenal-facing.

This sequence belongs to the Asterix family. In terms of assembly, component of the PAT complex, composed of WDR83OS/Asterix and CCDC47. The PAT complex is part of the multi-pass translocon (MPT) complex, composed of three subcomplexes, the GEL complex (composed of RAB5IF/OPTI and TMCO1), the BOS complex (composed of NCLN/Nicalin, NOMO1 and TMEM147) and the PAT complex (composed of WDR83OS/Asterix and CCDC47). The MPT complex associates with the SEC61 complex.

The protein localises to the endoplasmic reticulum membrane. Component of the multi-pass translocon (MPT) complex that mediates insertion of multi-pass membrane proteins into the lipid bilayer of membranes. The MPT complex takes over after the SEC61 complex: following membrane insertion of the first few transmembrane segments of proteins by the SEC61 complex, the MPT complex occludes the lateral gate of the SEC61 complex to promote insertion of subsequent transmembrane regions. Within the MPT complex, the PAT subcomplex sequesters any highly polar regions in the transmembrane domains away from the non-polar membrane environment until they can be buried in the interior of the fully assembled protein. Within the PAT subcomplex, WDR83OS/Asterix binds to and redirects the substrate to a location behind the SEC61 complex. This is PAT complex subunit Asterix (WDR83OS) from Sus scrofa (Pig).